The sequence spans 453 residues: Probable acetylornithine aminotransferase, mitochondrial (453 aa).

Residue lysine 302 is modified to N6-(pyridoxal phosphate)lysine.

It belongs to the class-III pyridoxal-phosphate-dependent aminotransferase family. Pyridoxal 5'-phosphate serves as cofactor.

It is found in the mitochondrion matrix. It catalyses the reaction N(2)-acetyl-L-ornithine + 2-oxoglutarate = N-acetyl-L-glutamate 5-semialdehyde + L-glutamate. It participates in amino-acid biosynthesis; L-arginine biosynthesis; N(2)-acetyl-L-ornithine from L-glutamate: step 4/4. The protein is Probable acetylornithine aminotransferase, mitochondrial (argD) of Dictyostelium discoideum (Social amoeba).